Consider the following 374-residue polypeptide: Ribosomal RNA large subunit methyltransferase G (374 aa).

This sequence belongs to the methyltransferase superfamily. RlmG family.

It localises to the cytoplasm. The enzyme catalyses guanosine(1835) in 23S rRNA + S-adenosyl-L-methionine = N(2)-methylguanosine(1835) in 23S rRNA + S-adenosyl-L-homocysteine + H(+). Specifically methylates the guanine in position 1835 (m2G1835) of 23S rRNA. In Pseudomonas paraeruginosa (strain DSM 24068 / PA7) (Pseudomonas aeruginosa (strain PA7)), this protein is Ribosomal RNA large subunit methyltransferase G.